Here is a 308-residue protein sequence, read N- to C-terminus: 4-hydroxyproline 2-epimerase (308 aa).

Cys88 functions as the Proton acceptor in the catalytic mechanism. Substrate-binding positions include 89 to 90 (GH), His208, and Asp232. Cys236 serves as the catalytic Proton donor. 237 to 238 (GT) provides a ligand contact to substrate.

This sequence belongs to the proline racemase family.

It catalyses the reaction trans-4-hydroxy-L-proline = cis-4-hydroxy-D-proline. Its function is as follows. Catalyzes the epimerization of trans-4-hydroxy-L-proline (t4LHyp) to cis-4-hydroxy-D-proline (c4DHyp). Is likely involved in a degradation pathway that converts t4LHyp to alpha-ketoglutarate. Can also catalyze the epimerization of trans-3-hydroxy-L-proline (t3LHyp) to cis-3-hydroxy-D-proline (c3DHyp), albeit with 19-fold lower efficiency. Displays no proline racemase activity. This is 4-hydroxyproline 2-epimerase from Chromobacterium violaceum (strain ATCC 12472 / DSM 30191 / JCM 1249 / CCUG 213 / NBRC 12614 / NCIMB 9131 / NCTC 9757 / MK).